Here is a 590-residue protein sequence, read N- to C-terminus: Aspartate--tRNA(Asp/Asn) ligase (590 aa).

Residue E173 participates in L-aspartate binding. Residues 197 to 200 (QIFK) form an aspartate region. Residue R219 participates in L-aspartate binding. Residues 219 to 221 (RDE) and Q228 contribute to the ATP site. H450 is a binding site for L-aspartate. E484 serves as a coordination point for ATP. An L-aspartate-binding site is contributed by R491. 536–539 (GLDR) is a binding site for ATP.

This sequence belongs to the class-II aminoacyl-tRNA synthetase family. Type 1 subfamily. In terms of assembly, homodimer.

The protein localises to the cytoplasm. The catalysed reaction is tRNA(Asx) + L-aspartate + ATP = L-aspartyl-tRNA(Asx) + AMP + diphosphate. Its function is as follows. Aspartyl-tRNA synthetase with relaxed tRNA specificity since it is able to aspartylate not only its cognate tRNA(Asp) but also tRNA(Asn). Reaction proceeds in two steps: L-aspartate is first activated by ATP to form Asp-AMP and then transferred to the acceptor end of tRNA(Asp/Asn). The protein is Aspartate--tRNA(Asp/Asn) ligase of Coxiella burnetii (strain Dugway 5J108-111).